The sequence spans 403 residues: Glutamyl-tRNA reductase 2 (403 aa).

Substrate contacts are provided by residues 47–50 (TCHR), Ser98, 103–105 (ETD), and Gln109. Residue Cys48 is the Nucleophile of the active site. Residue 177–182 (GAGAVG) coordinates NADP(+).

Belongs to the glutamyl-tRNA reductase family. As to quaternary structure, homodimer.

The enzyme catalyses (S)-4-amino-5-oxopentanoate + tRNA(Glu) + NADP(+) = L-glutamyl-tRNA(Glu) + NADPH + H(+). Its pathway is porphyrin-containing compound metabolism; protoporphyrin-IX biosynthesis; 5-aminolevulinate from L-glutamyl-tRNA(Glu): step 1/2. In terms of biological role, catalyzes the NADPH-dependent reduction of glutamyl-tRNA(Glu) to glutamate 1-semialdehyde (GSA). The polypeptide is Glutamyl-tRNA reductase 2 (Pyrobaculum arsenaticum (strain DSM 13514 / JCM 11321 / PZ6)).